Here is a 419-residue protein sequence, read N- to C-terminus: L-rhamnose isomerase (419 aa).

Residues His262, Asp294, and Asp296 each coordinate Mn(2+).

The protein belongs to the rhamnose isomerase family. As to quaternary structure, homotetramer. Mn(2+) serves as cofactor.

It localises to the cytoplasm. It catalyses the reaction L-rhamnopyranose = L-rhamnulose. Its pathway is carbohydrate degradation; L-rhamnose degradation; glycerone phosphate from L-rhamnose: step 1/3. Functionally, catalyzes the interconversion of L-rhamnose and L-rhamnulose. The polypeptide is L-rhamnose isomerase (Escherichia coli O7:K1 (strain IAI39 / ExPEC)).